A 226-amino-acid polypeptide reads, in one-letter code: Orotate phosphoribosyltransferase (226 aa).

Lys29 is a 5-phospho-alpha-D-ribose 1-diphosphate binding site. 37–38 (FF) contacts orotate. 5-phospho-alpha-D-ribose 1-diphosphate is bound by residues 75–76 (YK), Arg101, Lys102, Lys105, His107, and 126–134 (DDVISAGTS). Positions 130 and 158 each coordinate orotate.

This sequence belongs to the purine/pyrimidine phosphoribosyltransferase family. PyrE subfamily. As to quaternary structure, homodimer. Mg(2+) is required as a cofactor.

It carries out the reaction orotidine 5'-phosphate + diphosphate = orotate + 5-phospho-alpha-D-ribose 1-diphosphate. Its pathway is pyrimidine metabolism; UMP biosynthesis via de novo pathway; UMP from orotate: step 1/2. Functionally, catalyzes the transfer of a ribosyl phosphate group from 5-phosphoribose 1-diphosphate to orotate, leading to the formation of orotidine monophosphate (OMP). In Ralstonia nicotianae (strain ATCC BAA-1114 / GMI1000) (Ralstonia solanacearum), this protein is Orotate phosphoribosyltransferase.